Reading from the N-terminus, the 828-residue chain is Protein kintoun (828 aa).

Disordered regions lie at residues 1–31, 223–250, 383–424, 556–668, and 741–828; these read MSGS…DEPI, KNPT…EGEP, DSGV…PTSN, APVQ…HRGI, and KKNQ…EDLI. The span at 9 to 22 shows a compositional bias: basic residues; it reads RNKHSKGNLKHNNN. Ser384 bears the Phosphoserine mark. Residues 395-414 are compositionally biased toward acidic residues; sequence PVEEEEDGEDEIEAEEEEEE. Basic and acidic residues predominate over residues 556–573; sequence APVQEDKPGDIQFKRNDQ. Residues 591–601 show a composition bias toward acidic residues; the sequence is EREEGEIEEAE. The span at 606 to 620 shows a compositional bias: basic residues; the sequence is KKSASKKQRGKRNKK. Polar residues predominate over residues 625 to 641; the sequence is SESACVSLPTSVDSQPM. A compositionally biased stretch (basic residues) spans 741-755; sequence KKNQKRRDCKLRAQQ. Residue Ser759 is modified to Phosphoserine. Basic and acidic residues predominate over residues 788–808; sequence DSGLDLTRHNKKRELAEEADN. Positions 815 to 828 are enriched in acidic residues; sequence EMDDDDDDEDEDLI.

It belongs to the PIH1 family. Kintoun subfamily. As to quaternary structure, interacts with Pp1alpha-96A, Pp1-87B, Pp1-13C and flw.

It localises to the cytoplasm. Required for cytoplasmic pre-assembly of axonemal dyneins, thereby playing a central role in motility in cilia and flagella. Involved in pre-assembly of dynein arm complexes in the cytoplasm before intraflagellar transport loads them for the ciliary compartment. This Drosophila willistoni (Fruit fly) protein is Protein kintoun.